The primary structure comprises 526 residues: Probable feruloyl esterase B-2 (526 aa).

Residues 1–19 form the signal peptide; the sequence is MPSLRRLLPFLAAGSAALA. 2 cysteine pairs are disulfide-bonded: Cys28–Cys75 and Cys63–Cys114. Asn53, Asn85, Asn98, and Asn138 each carry an N-linked (GlcNAc...) asparagine glycan. Disulfide bonds link Cys187/Cys441, Cys256/Cys273, and Cys282/Cys291. Ser188 functions as the Acyl-ester intermediate in the catalytic mechanism. Asn246 carries an N-linked (GlcNAc...) asparagine glycan. Ca(2+) is bound by residues Asp257, Asp260, Ala262, Asp264, and Ile266. Asn287 and Asn311 each carry an N-linked (GlcNAc...) asparagine glycan. Residues Asp400 and His440 each act as charge relay system in the active site. N-linked (GlcNAc...) asparagine glycosylation is found at Asn490 and Asn516. Cys503 and Cys525 are disulfide-bonded.

This sequence belongs to the tannase family.

It localises to the secreted. The enzyme catalyses feruloyl-polysaccharide + H2O = ferulate + polysaccharide.. In terms of biological role, involved in degradation of plant cell walls. Hydrolyzes the feruloyl-arabinose ester bond in arabinoxylans as well as the feruloyl-galactose and feruloyl-arabinose ester bonds in pectin. The protein is Probable feruloyl esterase B-2 (faeB-2) of Aspergillus oryzae (strain ATCC 42149 / RIB 40) (Yellow koji mold).